Here is a 393-residue protein sequence, read N- to C-terminus: DNA-directed RNA polymerase subunit Rpo1C (393 aa).

The protein belongs to the RNA polymerase beta' chain family. Part of the RNA polymerase complex.

The protein resides in the cytoplasm. The enzyme catalyses RNA(n) + a ribonucleoside 5'-triphosphate = RNA(n+1) + diphosphate. Functionally, DNA-dependent RNA polymerase (RNAP) catalyzes the transcription of DNA into RNA using the four ribonucleoside triphosphates as substrates. Forms part of the jaw domain. In Halococcus morrhuae (Micrococcus morrhuae), this protein is DNA-directed RNA polymerase subunit Rpo1C.